The sequence spans 263 residues: Pimeloyl-[acyl-carrier protein] methyl ester esterase (263 aa).

Substrate contacts are provided by residues tryptophan 28, 86–87 (SL), and 149–153 (FLAIQ). The Nucleophile role is filled by serine 86. Active-site residues include aspartate 213 and histidine 240. Histidine 240 lines the substrate pocket.

Belongs to the AB hydrolase superfamily. Carboxylesterase BioH family. Monomer.

It is found in the cytoplasm. It carries out the reaction 6-carboxyhexanoyl-[ACP] methyl ester + H2O = 6-carboxyhexanoyl-[ACP] + methanol + H(+). It functions in the pathway cofactor biosynthesis; biotin biosynthesis. Functionally, the physiological role of BioH is to remove the methyl group introduced by BioC when the pimeloyl moiety is complete. It allows to synthesize pimeloyl-ACP via the fatty acid synthetic pathway through the hydrolysis of the ester bonds of pimeloyl-ACP esters. This Shewanella oneidensis (strain ATCC 700550 / JCM 31522 / CIP 106686 / LMG 19005 / NCIMB 14063 / MR-1) protein is Pimeloyl-[acyl-carrier protein] methyl ester esterase.